Reading from the N-terminus, the 463-residue chain is L-seryl-tRNA(Sec) selenium transferase (463 aa).

Position 295 is an N6-(pyridoxal phosphate)lysine (lysine 295).

Belongs to the SelA family. As to quaternary structure, homodecamer; pentamer of dimers. Binds only one seryl-tRNA(Sec) per dimer. The cofactor is pyridoxal 5'-phosphate.

It localises to the cytoplasm. It catalyses the reaction L-seryl-tRNA(Sec) + selenophosphate + H(+) = L-selenocysteinyl-tRNA(Sec) + phosphate. The protein operates within aminoacyl-tRNA biosynthesis; selenocysteinyl-tRNA(Sec) biosynthesis; selenocysteinyl-tRNA(Sec) from L-seryl-tRNA(Sec) (bacterial route): step 1/1. Its function is as follows. Converts seryl-tRNA(Sec) to selenocysteinyl-tRNA(Sec) required for selenoprotein biosynthesis. The sequence is that of L-seryl-tRNA(Sec) selenium transferase from Escherichia fergusonii (strain ATCC 35469 / DSM 13698 / CCUG 18766 / IAM 14443 / JCM 21226 / LMG 7866 / NBRC 102419 / NCTC 12128 / CDC 0568-73).